Reading from the N-terminus, the 491-residue chain is Aspartyl/glutamyl-tRNA(Asn/Gln) amidotransferase subunit B (491 aa).

The protein belongs to the GatB/GatE family. GatB subfamily. As to quaternary structure, heterotrimer of A, B and C subunits.

It carries out the reaction L-glutamyl-tRNA(Gln) + L-glutamine + ATP + H2O = L-glutaminyl-tRNA(Gln) + L-glutamate + ADP + phosphate + H(+). The enzyme catalyses L-aspartyl-tRNA(Asn) + L-glutamine + ATP + H2O = L-asparaginyl-tRNA(Asn) + L-glutamate + ADP + phosphate + 2 H(+). Its function is as follows. Allows the formation of correctly charged Asn-tRNA(Asn) or Gln-tRNA(Gln) through the transamidation of misacylated Asp-tRNA(Asn) or Glu-tRNA(Gln) in organisms which lack either or both of asparaginyl-tRNA or glutaminyl-tRNA synthetases. The reaction takes place in the presence of glutamine and ATP through an activated phospho-Asp-tRNA(Asn) or phospho-Glu-tRNA(Gln). The polypeptide is Aspartyl/glutamyl-tRNA(Asn/Gln) amidotransferase subunit B (Burkholderia cenocepacia (strain ATCC BAA-245 / DSM 16553 / LMG 16656 / NCTC 13227 / J2315 / CF5610) (Burkholderia cepacia (strain J2315))).